A 164-amino-acid polypeptide reads, in one-letter code: FMN reductase (NADH) RutF (164 aa).

The protein belongs to the non-flavoprotein flavin reductase family. RutF subfamily.

The enzyme catalyses FMNH2 + NAD(+) = FMN + NADH + 2 H(+). Catalyzes the reduction of FMN to FMNH2 which is used to reduce pyrimidine by RutA via the Rut pathway. This chain is FMN reductase (NADH) RutF, found in Shigella flexneri serotype X (strain 2002017).